The chain runs to 148 residues: Putative nickel-responsive regulator (148 aa).

Residues His-88, His-99, His-101, and Cys-107 each contribute to the Ni(2+) site.

It belongs to the transcriptional regulatory CopG/NikR family. Ni(2+) serves as cofactor.

In terms of biological role, transcriptional regulator. This Helicobacter acinonychis (strain Sheeba) protein is Putative nickel-responsive regulator.